The primary structure comprises 437 residues: GTPase Der (437 aa).

EngA-type G domains are found at residues 3 to 168 (PLIA…PCPE) and 178 to 353 (IKLA…LNRR). GTP is bound by residues 9–16 (GRPNVGKS), 56–60 (DTGGY), 120–123 (NKVD), 184–191 (GRPNVGKS), 231–235 (DTAGL), and 296–299 (NKWD). The 84-residue stretch at 354–437 (QKISTSNLNR…IPITMRFLRK (84 aa)) folds into the KH-like domain.

The protein belongs to the TRAFAC class TrmE-Era-EngA-EngB-Septin-like GTPase superfamily. EngA (Der) GTPase family. As to quaternary structure, associates with the 50S ribosomal subunit.

Its function is as follows. GTPase that plays an essential role in the late steps of ribosome biogenesis. This is GTPase Der from Chlorobaculum tepidum (strain ATCC 49652 / DSM 12025 / NBRC 103806 / TLS) (Chlorobium tepidum).